Here is a 328-residue protein sequence, read N- to C-terminus: Lipoyl synthase (328 aa).

7 residues coordinate [4Fe-4S] cluster: Cys56, Cys61, Cys67, Cys82, Cys86, Cys89, and Ser293. In terms of domain architecture, Radical SAM core spans 68-282; it reads WEDREATFLI…ERVGAELGFS (215 aa).

This sequence belongs to the radical SAM superfamily. Lipoyl synthase family. It depends on [4Fe-4S] cluster as a cofactor.

It localises to the cytoplasm. The catalysed reaction is [[Fe-S] cluster scaffold protein carrying a second [4Fe-4S](2+) cluster] + N(6)-octanoyl-L-lysyl-[protein] + 2 oxidized [2Fe-2S]-[ferredoxin] + 2 S-adenosyl-L-methionine + 4 H(+) = [[Fe-S] cluster scaffold protein] + N(6)-[(R)-dihydrolipoyl]-L-lysyl-[protein] + 4 Fe(3+) + 2 hydrogen sulfide + 2 5'-deoxyadenosine + 2 L-methionine + 2 reduced [2Fe-2S]-[ferredoxin]. The protein operates within protein modification; protein lipoylation via endogenous pathway; protein N(6)-(lipoyl)lysine from octanoyl-[acyl-carrier-protein]: step 2/2. Functionally, catalyzes the radical-mediated insertion of two sulfur atoms into the C-6 and C-8 positions of the octanoyl moiety bound to the lipoyl domains of lipoate-dependent enzymes, thereby converting the octanoylated domains into lipoylated derivatives. In Frankia alni (strain DSM 45986 / CECT 9034 / ACN14a), this protein is Lipoyl synthase.